The chain runs to 693 residues: Lamina-associated polypeptide 2, isoforms alpha/zeta (693 aa).

One can recognise an LEM-like domain in the interval 5-48 (LEDPSVLTKDKLKSELVANNVTLPAGEQRKDVYVQLYLQHLTAR). 3 disordered regions span residues 48-113 (RNRP…DVTE), 148-211 (LREQ…LAST), and 227-270 (TRPP…KLAP). Residues 49–107 (NRPPLAAGANSKGPPDFSSDEEREPTPVLGSGASVGRGRGAVGRKATKKTDKPRLEDKD) form a linker region. Serine 59, serine 66, and serine 67 each carry phosphoserine. At threonine 74 the chain carries Phosphothreonine. A phosphoserine mark is found at serine 79 and serine 82. 2 positions are modified to omega-N-methylarginine: arginine 85 and arginine 87. The span at 96 to 105 (KKTDKPRLED) shows a compositional bias: basic and acidic residues. In terms of domain architecture, LEM spans 108-152 (DLDVTELSNEELLDQLVRYGVNPGPIVGTTRKLYEKKLLKLREQG). At threonine 153 the chain carries Phosphothreonine. Polar residues predominate over residues 154-177 (ESRSSTPLPTVSSSAENTRQNGSN). Serine 155 and serine 158 each carry phosphoserine. Residues threonine 159 and threonine 163 each carry the phosphothreonine modification. 2 positions are modified to phosphoserine: serine 165 and serine 167. A compositionally biased stretch (basic and acidic residues) spans 178 to 190 (DSDRYSDNDEGKK). Positions 190 to 196 (KKEHKKV) match the Nuclear localization signal motif. Serine 206 carries the N6-acetyllysine modification. Over residues 245–254 (TKRDPPRETC) the composition is skewed to basic and acidic residues. Phosphoserine is present on serine 310. Arginine 329 is modified (omega-N-methylarginine). The interval 332–351 (KSRAQPLRAEEPGVSDQSVF) is disordered. 5 positions are modified to phosphoserine: serine 349, serine 352, serine 368, serine 420, and serine 422. Positions 412 to 422 (QSSYQDSESLS) are enriched in low complexity. The interval 412-442 (QSSYQDSESLSPPRKVPRLSEKPARGGDSGS) is disordered. The stretch at 557-656 (TESCDKHLDL…MGRRYLWLKD (100 aa)) forms a coiled coil. At lysine 655 the chain carries N6-acetyllysine.

The protein belongs to the LEM family. Homooligomer. Interacts with LMNA, BANF1 and RB1 and with chromosomes. Associates directly or indirectly with lamins at specific cell-cycle stages. Interacts with CMTM6. In terms of processing, phosphorylated in a mitose-specific manner.

It localises to the nucleus. It is found in the chromosome. In terms of biological role, may be involved in the structural organization of the nucleus and in the post-mitotic nuclear assembly. Plays an important role, together with LMNA, in the nuclear anchorage of RB1. This Mus musculus (Mouse) protein is Lamina-associated polypeptide 2, isoforms alpha/zeta (Tmpo).